A 2271-amino-acid polypeptide reads, in one-letter code: Serine-rich adhesin for platelets (2271 aa).

An N-terminal signal peptide occupies residues 1–89; sequence MSKRQKAFHD…VNMLHDQQAF (89 aa). A serine-rich repeat region 1, SRR1 region spans residues 90–230; sequence AASDAPLTSE…KTSTTSTSTA (141 aa). A compositionally biased stretch (polar residues) spans 100 to 111; sequence LNTQSETVGNQN. 3 disordered regions span residues 100–229, 751–791, and 806–2243; these read LNTQ…STST, NSMS…VVST, and SVSA…GLLG. The span at 112–128 shows a compositional bias: low complexity; that stretch reads STTIEASTSTADSTSVT. Over residues 129 to 140 the composition is skewed to polar residues; it reads KNSSSVQTSNSD. The span at 150–229 shows a compositional bias: low complexity; sequence VTSTTNSTSN…NKTSTTSTST (80 aa). The segment at 231 to 751 is non-repeat region (NRR); sequence PVKLRTFSRL…TTFKYEVTRN (521 aa). Low complexity-rich tracts occupy residues 752–791, 806–1392, and 1402–2214; these read SMSD…VVST, SVSA…LSLS, and SNSA…ATSE. Residues 752 to 2232 are serine-rich repeat region 2, SRR2; the sequence is SMSDSVSTSG…AQSEKRLPDT (1481 aa). The LPXTG sorting signal signature appears at 2229-2233; that stretch reads LPDTG. T2232 carries the pentaglycyl murein peptidoglycan amidated threonine modification. Positions 2233–2271 are cleaved as a propeptide — removed by sortase; that stretch reads GDSIKQNGLLGGVMTLLVGLGLMKRKKKKDENDQDDSQA.

It belongs to the serine-rich repeat protein (SRRP) family. Post-translationally, proteolytically cleaved by a metalloprotease. In terms of processing, glycosylated. It is probable that most of the Ser residues in SSR1 and SSR2 are O-GlcNAcylated. Sequential glycosylation by sugar transferases are able to generate complex sugar polymorphisms.

The protein localises to the secreted. The protein resides in the cell wall. In terms of biological role, mediates binding to human platelets, possibly through a receptor-ligand interaction. Probably associated with virulence in endovascular infection. In Staphylococcus aureus (strain USA300), this protein is Serine-rich adhesin for platelets (sraP).